A 244-amino-acid polypeptide reads, in one-letter code: Venom nerve growth factor 1 (244 aa).

The first 18 residues, 1 to 18 (MSMLCYTLIIAFLIGIWA), serve as a signal peptide directing secretion. Positions 19–125 (APKSEDNVPL…TLNRNIRAKR (107 aa)) are excised as a propeptide. Residues 47 to 66 (GLKTSRNTDQRHPAPKKAED) show a composition bias toward basic and acidic residues. The interval 47-67 (GLKTSRNTDQRHPAPKKAEDQ) is disordered. 3 disulfides stabilise this stretch: Cys139–Cys205, Cys181–Cys233, and Cys193–Cys235.

It belongs to the NGF-beta family. Homodimer; non-covalently linked. In terms of tissue distribution, expressed by the venom gland.

It localises to the secreted. Nerve growth factor is important for the development and maintenance of the sympathetic and sensory nervous systems. It stimulates division and differentiation of sympathetic and embryonic sensory neurons as well as basal forebrain cholinergic neurons in the brain. Its relevance in the snake venom is not clear. However, it has been shown to inhibit metalloproteinase-dependent proteolysis of platelet glycoprotein Ib alpha, suggesting a metalloproteinase inhibition to prevent metalloprotease autodigestion and/or protection against prey proteases. Binds a lipid between the two protein chains in the homodimer. The lipid-bound form promotes histamine relase from mouse mast cells, contrary to the lipid-free form. In Notechis scutatus scutatus (Mainland tiger snake), this protein is Venom nerve growth factor 1.